The following is a 203-amino-acid chain: ATP-dependent Clp protease proteolytic subunit (203 aa).

Ser-103 serves as the catalytic Nucleophile. His-128 is an active-site residue.

Belongs to the peptidase S14 family. Fourteen ClpP subunits assemble into 2 heptameric rings which stack back to back to give a disk-like structure with a central cavity, resembling the structure of eukaryotic proteasomes.

The protein localises to the cytoplasm. It catalyses the reaction Hydrolysis of proteins to small peptides in the presence of ATP and magnesium. alpha-casein is the usual test substrate. In the absence of ATP, only oligopeptides shorter than five residues are hydrolyzed (such as succinyl-Leu-Tyr-|-NHMec, and Leu-Tyr-Leu-|-Tyr-Trp, in which cleavage of the -Tyr-|-Leu- and -Tyr-|-Trp bonds also occurs).. Its function is as follows. Cleaves peptides in various proteins in a process that requires ATP hydrolysis. Has a chymotrypsin-like activity. Plays a major role in the degradation of misfolded proteins. In Nitrosococcus oceani (strain ATCC 19707 / BCRC 17464 / JCM 30415 / NCIMB 11848 / C-107), this protein is ATP-dependent Clp protease proteolytic subunit.